Reading from the N-terminus, the 749-residue chain is Probable serine/threonine-protein kinase drkC (749 aa).

The signal sequence occupies residues 1–31 (MIIINKYIRMNKIAILFSFFILICCTGYSIS). Over 32–423 (YKINGINENK…TSPNYQKIIY (392 aa)) the chain is Extracellular. Residues 124 to 153 (DRTDQVSTSSSSSSFSEENKKSSSDDSAPA) are disordered. A compositionally biased stretch (low complexity) spans 130–139 (STSSSSSSFS). N-linked (GlcNAc...) asparagine glycosylation is found at Asn157, Asn189, Asn283, Asn358, Asn373, Asn381, and Asn397. The chain crosses the membrane as a helical span at residues 424-444 (IVVGVGIAVLLIIAVGIYFII). Residues 445–749 (RLRIKNKRLN…QEIVKRLEAM (305 aa)) lie on the Cytoplasmic side of the membrane. One can recognise a Protein kinase domain in the interval 491–749 (IVVQNRIGRG…QEIVKRLEAM (259 aa)). Residues 497–505 (IGRGSCAEV) and Lys518 contribute to the ATP site. Residue Asp615 is the Proton acceptor of the active site.

This sequence belongs to the protein kinase superfamily. TKL Ser/Thr protein kinase family.

The protein localises to the membrane. It carries out the reaction L-seryl-[protein] + ATP = O-phospho-L-seryl-[protein] + ADP + H(+). It catalyses the reaction L-threonyl-[protein] + ATP = O-phospho-L-threonyl-[protein] + ADP + H(+). This chain is Probable serine/threonine-protein kinase drkC (drkC), found in Dictyostelium discoideum (Social amoeba).